The following is a 236-amino-acid chain: Small ribosomal subunit protein mS41 (236 aa).

It belongs to the mitochondrion-specific ribosomal protein mS41 family. In terms of assembly, component of the mitochondrial small ribosomal subunit (mt-SSU). Mature N.crassa 74S mitochondrial ribosomes consist of a small (37S) and a large (54S) subunit. The 37S small subunit contains a 16S ribosomal RNA (16S mt-rRNA) and 32 different proteins. The 54S large subunit contains a 23S rRNA (23S mt-rRNA) and 42 different proteins.

It is found in the mitochondrion. Component of the mitochondrial ribosome (mitoribosome), a dedicated translation machinery responsible for the synthesis of mitochondrial genome-encoded proteins, including at least some of the essential transmembrane subunits of the mitochondrial respiratory chain. The mitoribosomes are attached to the mitochondrial inner membrane and translation products are cotranslationally integrated into the membrane. The polypeptide is Small ribosomal subunit protein mS41 (fyv4) (Neurospora crassa (strain ATCC 24698 / 74-OR23-1A / CBS 708.71 / DSM 1257 / FGSC 987)).